The sequence spans 471 residues: Probable anion transporter 5, chloroplastic (471 aa).

The transit peptide at 1–59 (MAASASASALQAERCLLVGVGAGPRRHRLPLRMPPPLHAPPALLLLPHRRRRRWPPAVR) directs the protein to the chloroplast. The tract at residues 56 to 76 (PAVRASPGEGGGGGGGGGGGG) is disordered. Transmembrane regions (helical) follow at residues 62-82 (PGEG…AGAL), 103-123 (IGVV…GFMP), 162-182 (VVFG…PPII), and 185-205 (LGWE…CLGF). Gly residues predominate over residues 63–76 (GEGGGGGGGGGGGG). The disordered stretch occupies residues 226–247 (GQSPSGSSDLISSSVSPKSSES). The segment covering 228-247 (SPSGSSDLISSSVSPKSSES) has biased composition (low complexity). 6 helical membrane passes run 270-290 (VWAM…CLSW), 307-327 (AWVS…AAPF), 348-368 (IAFL…GVPP), 371-391 (IVAF…GLYC), 403-423 (ILLG…VALT), and 435-455 (ISLF…WLAF).

The protein belongs to the major facilitator superfamily. Sodium/anion cotransporter (TC 2.A.1.14) family.

The protein resides in the plastid. It is found in the chloroplast membrane. In terms of biological role, probable anion transporter. This Oryza sativa subsp. japonica (Rice) protein is Probable anion transporter 5, chloroplastic (PHT4;5).